The primary structure comprises 239 residues: tRNA (guanine-N(7)-)-methyltransferase (239 aa).

4 residues coordinate S-adenosyl-L-methionine: E69, E94, D121, and D144. D144 is an active-site residue. K148 serves as a coordination point for substrate. An interaction with RNA region spans residues 150–155; that stretch reads RHNKRR. Substrate-binding positions include D180 and 217 to 220; that span reads TKFE.

This sequence belongs to the class I-like SAM-binding methyltransferase superfamily. TrmB family. As to quaternary structure, monomer.

It carries out the reaction guanosine(46) in tRNA + S-adenosyl-L-methionine = N(7)-methylguanosine(46) in tRNA + S-adenosyl-L-homocysteine. It functions in the pathway tRNA modification; N(7)-methylguanine-tRNA biosynthesis. Its function is as follows. Catalyzes the formation of N(7)-methylguanine at position 46 (m7G46) in tRNA. In Escherichia coli O6:K15:H31 (strain 536 / UPEC), this protein is tRNA (guanine-N(7)-)-methyltransferase.